The primary structure comprises 171 residues: Large ribosomal subunit protein uL10 (171 aa).

The protein belongs to the universal ribosomal protein uL10 family. As to quaternary structure, part of the ribosomal stalk of the 50S ribosomal subunit. The N-terminus interacts with L11 and the large rRNA to form the base of the stalk. The C-terminus forms an elongated spine to which L12 dimers bind in a sequential fashion forming a multimeric L10(L12)X complex.

Functionally, forms part of the ribosomal stalk, playing a central role in the interaction of the ribosome with GTP-bound translation factors. The protein is Large ribosomal subunit protein uL10 of Sphingopyxis alaskensis (strain DSM 13593 / LMG 18877 / RB2256) (Sphingomonas alaskensis).